A 471-amino-acid polypeptide reads, in one-letter code: Mitochondrial distribution and morphology protein 10 (471 aa).

The tract at residues 313–338 (SNSAATPPRIKNSDSQVLSNNSTDSK) is disordered. Over residues 325–338 (SDSQVLSNNSTDSK) the composition is skewed to polar residues.

It belongs to the MDM10 family. Component of the ER-mitochondria encounter structure (ERMES) or MDM complex, composed of MMM1, MDM10, MDM12 and MDM34. Associates with the mitochondrial outer membrane sorting assembly machinery SAM(core) complex.

The protein resides in the mitochondrion outer membrane. In terms of biological role, component of the ERMES/MDM complex, which serves as a molecular tether to connect the endoplasmic reticulum and mitochondria. Components of this complex are involved in the control of mitochondrial shape and protein biogenesis and may function in phospholipid exchange. MDM10 is involved in the late assembly steps of the general translocase of the mitochondrial outer membrane (TOM complex). Functions in the TOM40-specific route of the assembly of outer membrane beta-barrel proteins, including the association of TOM40 with the receptor TOM22 and small TOM proteins. Can associate with the SAM(core) complex as well as the MDM12-MMM1 complex, both involved in late steps of the major beta-barrel assembly pathway, that is responsible for biogenesis of all outer membrane beta-barrel proteins. May act as a switch that shuttles between both complexes and channels precursor proteins into the TOM40-specific pathway. Plays a role in mitochondrial morphology and in the inheritance of mitochondria. The sequence is that of Mitochondrial distribution and morphology protein 10 from Debaryomyces hansenii (strain ATCC 36239 / CBS 767 / BCRC 21394 / JCM 1990 / NBRC 0083 / IGC 2968) (Yeast).